Here is a 186-residue protein sequence, read N- to C-terminus: Inosine/xanthosine triphosphatase (186 aa).

Q75 is a Mg(2+) binding site.

The protein belongs to the YjjX NTPase family. As to quaternary structure, homodimer. It depends on Mg(2+) as a cofactor. Mn(2+) serves as cofactor.

The catalysed reaction is XTP + H2O = XDP + phosphate + H(+). The enzyme catalyses ITP + H2O = IDP + phosphate + H(+). Phosphatase that hydrolyzes non-canonical purine nucleotides such as XTP and ITP to their respective diphosphate derivatives. Probably excludes non-canonical purines from DNA/RNA precursor pool, thus preventing their incorporation into DNA/RNA and avoiding chromosomal lesions. This chain is Inosine/xanthosine triphosphatase, found in Shewanella baltica (strain OS185).